A 395-amino-acid chain; its full sequence is uncharacterized protein (395 aa).

Disordered regions lie at residues methionine 1–serine 121, methionine 136–asparagine 187, glutamine 308–glutamate 335, and isoleucine 365–aspartate 395. Residues proline 13–glutamine 28 show a composition bias toward basic and acidic residues. Residues lysine 64–serine 73 are compositionally biased toward basic residues. Residues serine 97 to glutamate 111 are compositionally biased toward basic and acidic residues. Residues threonine 144 to asparagine 164 are compositionally biased toward polar residues. Residues lysine 170–glycine 179 are compositionally biased toward basic residues. A compositionally biased stretch (basic residues) spans isoleucine 365–lysine 377. Residues lysine 378–aspartate 395 are compositionally biased toward basic and acidic residues.

This is an uncharacterized protein from Caenorhabditis elegans.